The chain runs to 225 residues: Uridylate kinase (225 aa).

9–10 (GS) contributes to the ATP binding site. A UMP-binding site is contributed by Gly-46. Positions 47 and 51 each coordinate ATP. UMP is bound by residues Asp-67 and 115–121 (THPAHTT). Thr-141, Asn-142, Tyr-147, and Asp-150 together coordinate ATP.

It belongs to the UMP kinase family. Homohexamer.

Its subcellular location is the cytoplasm. The enzyme catalyses UMP + ATP = UDP + ADP. Its pathway is pyrimidine metabolism; CTP biosynthesis via de novo pathway; UDP from UMP (UMPK route): step 1/1. Its activity is regulated as follows. Inhibited by UTP. Functionally, catalyzes the reversible phosphorylation of UMP to UDP. The chain is Uridylate kinase from Methanococcus aeolicus (strain ATCC BAA-1280 / DSM 17508 / OCM 812 / Nankai-3).